The following is a 183-amino-acid chain: MSAFKKSLLVAGVAMILSNNVFADEGHGIVKFKGEVISAPCSIKPGDEDLTVNLGEVADTVLKSDQKSLAEPFTIHLQDCMLSQGGTTYSKAKVTFTTANTMTGQSDLLKNTKETEIGGATGVGVRILDSQSGEVTLGTPVVITFNNTNSYQELNFKARMESPSKDATPGNVYAQADYKIAYE.

The signal sequence occupies residues 1-23 (MSAFKKSLLVAGVAMILSNNVFA). A disulfide bridge connects residues C41 and C80.

It belongs to the fimbrial protein family.

Its subcellular location is the fimbrium. This is an uncharacterized protein from Escherichia coli (strain K12).